Consider the following 86-residue polypeptide: Thioredoxin (86 aa).

Residues Cys-15 and Cys-18 each act as nucleophile in the active site. A disulfide bond links Cys-15 and Cys-18.

It belongs to the glutaredoxin family.

Its function is as follows. Does not function as a glutathione-disulfide oxidoreductase in the presence of glutathione and glutathione reductase. Has low thioredoxin activity in vitro. The chain is Thioredoxin from Methanocaldococcus jannaschii (strain ATCC 43067 / DSM 2661 / JAL-1 / JCM 10045 / NBRC 100440) (Methanococcus jannaschii).